Consider the following 296-residue polypeptide: Adrenocorticotropic hormone receptor (296 aa).

The Extracellular portion of the chain corresponds to 1-23 (MKHIINSYEHTNDTARNNSDCPD). N-linked (GlcNAc...) asparagine glycans are attached at residues Asn-12 and Asn-17. 2 cysteine pairs are disulfide-bonded: Cys-21–Cys-253 and Cys-245–Cys-251. Residues 24–49 (VVLPEEIFFTISVIGILENLIVLLAV) form a helical membrane-spanning segment. The Cytoplasmic segment spans residues 50 to 58 (IKNKNLQSP). A helical transmembrane segment spans residues 59–79 (MYFFICSLAISDMLGSLYKIL). Topologically, residues 80–104 (ENILIMFRNMGYLKPRGSFESTADD) are extracellular. A helical transmembrane segment spans residues 105–126 (IIDCMFILSLLGSIFSLSVIAA). Topologically, residues 127–147 (DRYITIFHALQYHSIVTMRRT) are cytoplasmic. Residues 148–168 (IITLTIIWMFCTGSGITMVIF) form a helical membrane-spanning segment. Topologically, residues 169 to 180 (SHHIPTVLTFTS) are extracellular. Residues 181–199 (LFPLMLVFILCLYIHMFLL) form a helical membrane-spanning segment. Residues 200–217 (ARSHARKISTLPRTNMKG) lie on the Cytoplasmic side of the membrane. The chain crosses the membrane as a helical span at residues 218–244 (AMTLTILLGVFIFCWAPFVLHVLLMTF). Residues 245-256 (CPNNPYCVCYMS) are Extracellular-facing. The helical transmembrane segment at 257-278 (LFQVNGMLIMCNAVIDPFIYAF) threads the bilayer. Residues 279 to 296 (RSPELRDAFKRMLFCNRY) are Cytoplasmic-facing. Cys-293 is lipidated: S-palmitoyl cysteine.

It belongs to the G-protein coupled receptor 1 family. Homodimer. Interacts with corticotropin (ACTH). Interacts with MRAP; this interaction targets MC2R to the plasma membrane. Interacts with MRAP2; competing with MRAP for binding to MC2R and impairing the binding of corticotropin (ACTH). Ubiquitinated by MGRN1 that may be involved in post-endocytic trafficking and/or degradation of internalized receptor.

It is found in the cell membrane. Hormone receptor primarily expressed in adrenal cortex that plays a key role in regulating adrenocortical function. Upon corticotropin (ACTH) binding, facilitates the release of adrenal glucocorticoids, including cortisol and corticosterone. In addition, MC2R is required for fetal and neonatal adrenal gland development. Mechanistically, activates adenylate cyclase (cAMP), the MAPK cascade as well as the cAMP-dependent protein kinase A pathway leading to steroidogenic factor 1/NR5A1-mediated transcriptional activation. In Mus musculus (Mouse), this protein is Adrenocorticotropic hormone receptor (Mc2r).